A 232-amino-acid chain; its full sequence is 2,3-bisphosphoglycerate-dependent phosphoglycerate mutase (232 aa).

Substrate is bound by residues 10 to 17, 23 to 24, Arg-62, 89 to 92, Lys-100, 116 to 117, and 185 to 186; these read RHGESQWN, TG, ERHY, RR, and GN. His-11 functions as the Tele-phosphohistidine intermediate in the catalytic mechanism. The Proton donor/acceptor role is filled by Glu-89.

This sequence belongs to the phosphoglycerate mutase family. BPG-dependent PGAM subfamily. Homodimer.

It carries out the reaction (2R)-2-phosphoglycerate = (2R)-3-phosphoglycerate. The protein operates within carbohydrate degradation; glycolysis; pyruvate from D-glyceraldehyde 3-phosphate: step 3/5. In terms of biological role, catalyzes the interconversion of 2-phosphoglycerate and 3-phosphoglycerate. This Blochmanniella floridana protein is 2,3-bisphosphoglycerate-dependent phosphoglycerate mutase.